Here is a 231-residue protein sequence, read N- to C-terminus: NADH-ubiquinone oxidoreductase chain 4 (231 aa).

The next 7 helical transmembrane spans lie at 1 to 21, 34 to 54, 63 to 85, 89 to 111, 128 to 148, 156 to 176, and 211 to 231; these read PIAGSMVLAAILLKLGGYGII, MFLPFIVLALWGAILANLTCL, IAYSSISHMGLVVAAIIIQTPWG, AMALMIAHGFTSSALFCLANTTY, ILPMATTWWLLTNLMNIAIPP, LLIMSALFNWCPTTIIMLGLS, and LLMILHLIPLMMISMKPELII.

This sequence belongs to the complex I subunit 4 family.

It localises to the mitochondrion membrane. It catalyses the reaction a ubiquinone + NADH + 5 H(+)(in) = a ubiquinol + NAD(+) + 4 H(+)(out). Core subunit of the mitochondrial membrane respiratory chain NADH dehydrogenase (Complex I) that is believed to belong to the minimal assembly required for catalysis. Complex I functions in the transfer of electrons from NADH to the respiratory chain. The immediate electron acceptor for the enzyme is believed to be ubiquinone. The polypeptide is NADH-ubiquinone oxidoreductase chain 4 (MT-ND4) (Agkistrodon piscivorus piscivorus (Eastern cottonmouth)).